Consider the following 252-residue polypeptide: Sororin (252 aa).

Disordered stretches follow at residues 1 to 48 (MSGR…WPKT) and 72 to 142 (AVQS…SKKV). Phosphoserine occurs at positions 21, 33, 35, 75, 79, and 83. Positions 86 to 104 (LEKENEPPGRELTKEDLFK) are enriched in basic and acidic residues. Residues 88–90 (KEN) carry the KEN box motif. The residue at position 98 (Thr98) is a Phosphothreonine. Residues 105 to 116 (THSVPATPTSTP) are compositionally biased toward low complexity. Phosphoserine is present on Ser107. Phosphothreonine occurs at positions 111 and 115. Residues 124–140 (SSSKEGELDARDLEMSK) show a composition bias toward basic and acidic residues. Ser154 carries the phosphoserine modification. A Phosphothreonine modification is found at Thr159. The short motif at 166-168 (FGF) is the FGF motif element. Residues 199 to 222 (WAPDMTLPGISPPPEKQKRKKKKM) are disordered. Ser209 is modified (phosphoserine). The interval 230–252 (LDEWAAAMNAEFEAAEQFDLLVE) is C-terminal Sororin domain.

The protein belongs to the sororin family. Interacts with the APC/C complex. Interacts with the chromatin-bound cohesin complex; the interaction is indirect, occurs after DNA replication and requires acetylation of the cohesin component SMC3. Interacts (via the FGF motif) with PDS5A and PDS5B; the interaction is direct and prevents the interaction of PDS5A with WAPL. In terms of processing, phosphorylated. Phosphorylation, as cells enter mitosis, disrupts the interaction with PDS5A and relieves the inhibition of WAPL by CDCA5. Post-translationally, ubiquitinated by the APC/C complex in G1, leading to its degradation.

The protein localises to the nucleus. Its subcellular location is the chromosome. The protein resides in the cytoplasm. In terms of biological role, regulator of sister chromatid cohesion in mitosis stabilizing cohesin complex association with chromatin. May antagonize the action of WAPL which stimulates cohesin dissociation from chromatin. Cohesion ensures that chromosome partitioning is accurate in both meiotic and mitotic cells and plays an important role in DNA repair. Required for efficient DNA double-stranded break repair. This is Sororin (CDCA5) from Homo sapiens (Human).